A 309-amino-acid chain; its full sequence is Anamorsin (309 aa).

The tract at residues 6-172 (ISPGQLVAVF…KPNFEVGSSS (167 aa)) is N-terminal SAM-like domain. The tract at residues 173 to 222 (QLKLLHKKSSSVKPVVDPATAKLWTLSANDMEDDSMDLIDSDELLDPEDL) is linker. 3 positions are modified to phosphoserine: serine 182, serine 183, and serine 213. [2Fe-2S] cluster contacts are provided by cysteine 235, cysteine 244, cysteine 247, and cysteine 249. Positions 235 to 249 (CGEGKKRKACKNCTC) are fe-S binding site A. Serine 269 is subject to Phosphoserine. Residues cysteine 271, cysteine 274, cysteine 282, and cysteine 285 each coordinate [4Fe-4S] cluster. Short sequence motifs (cx2C motif) lie at residues 271 to 274 (CGNC) and 282 to 285 (CANC). The fe-S binding site B stretch occupies residues 271–285 (CGNCYLGDAFRCANC). Phosphoserine is present on residues serine 302 and serine 304.

It belongs to the anamorsin family. Monomer. Interacts with NDOR1. Interacts with CHCHD4. Requires [2Fe-2S] cluster as cofactor. It depends on [4Fe-4S] cluster as a cofactor.

It localises to the cytoplasm. The protein resides in the nucleus. Its subcellular location is the mitochondrion intermembrane space. Its function is as follows. Component of the cytosolic iron-sulfur (Fe-S) protein assembly (CIA) machinery required for the maturation of extramitochondrial Fe-S proteins. Part of an electron transfer chain functioning in an early step of cytosolic Fe-S biogenesis, facilitating the de novo assembly of a [4Fe-4S] cluster on the scaffold complex NUBP1-NUBP2. Electrons are transferred to CIAPIN1 from NADPH via the FAD- and FMN-containing protein NDOR1. NDOR1-CIAPIN1 are also required for the assembly of the diferric tyrosyl radical cofactor of ribonucleotide reductase (RNR), probably by providing electrons for reduction during radical cofactor maturation in the catalytic small subunit. Has anti-apoptotic effects in the cell. Involved in negative control of cell death upon cytokine withdrawal. Promotes development of hematopoietic cells. In Rattus norvegicus (Rat), this protein is Anamorsin.